We begin with the raw amino-acid sequence, 422 residues long: Telomerase-associated protein of 50 kDa (422 aa).

In terms of assembly, component of the telomerase holoenzyme complex, composed of the catalytic core (the catalytic subunit TERT, the telomerase RNA template component TER and TAP65/p65), which is associated with two heterotrimeric subcomplexes: (i) the replication protein A (RPA)-related subcomplex, composed of TEB1, RPA2/TEB2 and RPA3/TEB3 and (ii) the CST-like subcomplex, composed of TAP75/p75, TAP45/p45 and TAP19/p19. TEB1 and the CST-like subcomplex are tethered to the catalytic core by TAP50/p50.

It localises to the chromosome. The protein localises to the telomere. Functionally, tethering component of the holoenzyme telomerase ribonucleoprotein (RNP) complex. Telomerase is an essential ribonucleoprotein enzyme that copies new telomeric repeats onto chromosome ends by repetitively synthesizing the short telomere-repeat sequence 5'-TTGGGG-3' using an RNA template component TER. In the telomerase holoenzyme complex, acts as a hub that anchors the two heterotrimeric subcomplexes with the catalytic core. This is Telomerase-associated protein of 50 kDa from Tetrahymena thermophila (strain SB210).